The chain runs to 905 residues: MMNRFRKWLYKPKRSDPQLLAQFYYADEELNQVAAELDSLDGRKEPQRCTLLVSQFRSCQDNVLNIINQIMEECIPQDRAPRDFCVKFPEEIRHDNLAGQLWFGAECLAAGSIIMNRELESMAMRPLAKELTRSLEDVRGTLRDQALRDLNTYTEKMREALRRFDVLFAEFELSYVSAMVPVKSPREYYVQQEVIVLFCETVERALDFGYLTQDMIDDYEPALMFTIPRLAIVCGLVVYADGPLNLDRKVEDMSELFRPFHTLLRKIRDLLQALTEEELHTLERSLCVSQDVELPIRADTQAPSALAPTFSASLPPEETLSASANNPEAELACSMQYDDQELEELSRMVHRAGDEMSSLLSPPSACQSPAHRPGSEASPRGEASPARARLKSGSDEEERVFFMDDVEVTESPARPESPGNTFELTQGNAQQRGQDGQSGEVGVEAPALVKEEDWSNNNVEGDKIKLASLMGSTSCSCLDSQLYLDGWEVSAEDAETAEMIAHRTGGMKLSATVIFNPKSPTSQDSAVAAQEAPGHGTSPLEPRAEGTGDNSHKLSTTATNCLLHSCVCCGSCGDSRDDAVERLREKCGPGSVISASNPSVSLAKGGDKEPERIDEAQPSDVTLPAEDASNRQEPKAPASSKCLAHTSGPQVDTASRLQGEGEVKGQPEPEARKQDPEKSPVVSGDSPRGDVAQTEHQHLLGSSSTVGSCSLDNTRLDVATAAMPVTPMATREKIRSRFHGSHDLIHRLFVCISGVADQLQTNYASDLRSILKTLFEVMATKPETDDKEKLKKVTQTLRSAALEDCALCQETVSSSELAAKTRDGDFEDPPEWVPDEACGFCTSCKAPFTVIRRKHHCRSCGKIFCSRCSSHSAPLPRYGQVKPVRVCTHCYMFHVTPFYSDKTGM.

Residue Lys-87 forms a Glycyl lysine isopeptide (Lys-Gly) (interchain with G-Cter in ubiquitin) linkage. Ser-334 carries the phosphoserine modification. The interval 354–441 (DEMSSLLSPP…RGQDGQSGEV (88 aa)) is disordered. Polar residues-rich tracts occupy residues 358-367 (SLLSPPSACQ) and 418-437 (PGNTFELTQGNAQQRGQDGQ). Thr-512 carries the phosphothreonine modification. Disordered regions lie at residues 516 to 552 (NPKSPTSQDSAVAAQEAPGHGTSPLEPRAEGTGDNSH) and 589 to 691 (PGSV…RGDV). Composition is skewed to basic and acidic residues over residues 542–552 (PRAEGTGDNSH) and 605–615 (GGDKEPERIDE). Residues 647 to 656 (SGPQVDTASR) show a composition bias toward polar residues. Positions 659–678 (GEGEVKGQPEPEARKQDPEK) are enriched in basic and acidic residues. Residues 835 to 895 (DEACGFCTSC…VCTHCYMFHV (61 aa)) form an FYVE-type zinc finger. Residues Cys-841, Cys-844, Cys-857, Cys-860, Cys-865, Cys-868, and Cys-887 each contribute to the Zn(2+) site. Thr-888 bears the Phosphothreonine; by MAP2K mark. Residue Cys-890 participates in Zn(2+) binding.

Belongs to the lst-2 family. As to quaternary structure, interacts with TRIM3. Monoubiquitination at Lys-87 prevents binding to phosphatidylinositol 3-phosphate (PI3P) and localization to early endosome membranes. In terms of tissue distribution, enriched in brain (at protein level).

It is found in the cytoplasm. The protein resides in the cytosol. It localises to the early endosome membrane. Negative regulator of epidermal growth factor receptor (EGFR) signaling. Acts by promoting EGFR degradation in endosomes when not monoubiquitinated. This chain is Lateral signaling target protein 2 homolog (Zfyve28), found in Mus musculus (Mouse).